A 480-amino-acid polypeptide reads, in one-letter code: Thyroid receptor-interacting protein 6 (480 aa).

The span at Met-1–Pro-12 shows a compositional bias: pro residues. The disordered stretch occupies residues Met-1 to Arg-43. Arg-25 bears the Asymmetric dimethylarginine; alternate mark. Arg-25 carries the post-translational modification Omega-N-methylarginine; alternate. Tyr-55 is modified (phosphotyrosine; by SRC). The disordered stretch occupies residues Pro-57 to Asp-84. A Phosphoserine modification is found at Ser-92. The segment at Leu-107–Gly-134 is disordered. Residues Asp-108 to Ala-122 show a composition bias toward basic and acidic residues. Residues Arg-111, Arg-183, and Arg-190 each carry the omega-N-methylarginine modification. At Ser-193 the chain carries Phosphoserine. 2 positions are modified to omega-N-methylarginine: Arg-209 and Arg-242. A disordered region spans residues Arg-218 to Glu-257. Residues Ala-238–Glu-247 are compositionally biased toward gly residues. LIM zinc-binding domains follow at residues Gly-281–Thr-339, Glu-341–Pro-401, and Ser-404–Glu-471. Residues Ser-473–Cys-480 are interaction with MAGI1 and PTPN13.

It belongs to the zyxin/ajuba family. Specifically interacts with the ligand binding domain of the thyroid receptor (TR) in the presence of thyroid hormone. Interacts (via the third LIM domain and C-terminus) with PTPN13 (via the second PDZ domain). Interacts (via the second LIM domain or via the third LIM domain plus C-terminus) with PDLIM4 (via PDZ domain). Found in a complex with PTPN13 and PDLIM4. Interacts with SVIL isoform 2. Interacts with LPAR2 but not other LPA receptors. Interacts with PRKAA2. Interacts with MAGI1. Interacts with SCRIB. In case of infection, interacts with S.typhimurium protein sseI. In terms of processing, phosphorylation at Tyr-55 by SRC is required for enhancement of lysophosphatidic acid-induced cell migration. Tyr-55 is dephosphorylated by PTPN13. As to expression, highly expressed in kidney, stomach, lung, heart and testis. Low expression levels in brain, colon, thymus, pancreas and skin. Not expressed in skeletal muscle.

It is found in the cytoplasm. Its subcellular location is the cytoskeleton. The protein resides in the cell junction. It localises to the focal adhesion. The protein localises to the nucleus. In terms of biological role, relays signals from the cell surface to the nucleus to weaken adherens junction and promote actin cytoskeleton reorganization and cell invasiveness. Involved in lysophosphatidic acid-induced cell adhesion and migration. Acts as a transcriptional coactivator for NF-kappa-B and JUN, and mediates the transrepression of these transcription factors induced by glucocorticoid receptor. This is Thyroid receptor-interacting protein 6 (Trip6) from Mus musculus (Mouse).